A 580-amino-acid chain; its full sequence is NADH-quinone oxidoreductase subunit C/D (580 aa).

Residues 1 to 171 are NADH dehydrogenase I subunit C; that stretch reads MSLDQAIPEA…PPFVLTDRLF (171 aa). Residues 195–580 are NADH dehydrogenase I subunit D; the sequence is ELMVLNFGPH…IDFVMSDVDR (386 aa).

In the N-terminal section; belongs to the complex I 30 kDa subunit family. This sequence in the C-terminal section; belongs to the complex I 49 kDa subunit family. As to quaternary structure, NDH-1 is composed of 13 different subunits. Subunits NuoB, CD, E, F, and G constitute the peripheral sector of the complex.

It is found in the cell inner membrane. It carries out the reaction a quinone + NADH + 5 H(+)(in) = a quinol + NAD(+) + 4 H(+)(out). In terms of biological role, NDH-1 shuttles electrons from NADH, via FMN and iron-sulfur (Fe-S) centers, to quinones in the respiratory chain. The immediate electron acceptor for the enzyme in this species is believed to be ubiquinone. Couples the redox reaction to proton translocation (for every two electrons transferred, four hydrogen ions are translocated across the cytoplasmic membrane), and thus conserves the redox energy in a proton gradient. This chain is NADH-quinone oxidoreductase subunit C/D, found in Cereibacter sphaeroides (strain KD131 / KCTC 12085) (Rhodobacter sphaeroides).